We begin with the raw amino-acid sequence, 1151 residues long: Ankyrin and IPT/TIG repeat-containing protein C26H5.05 (1151 aa).

Disordered stretches follow at residues 77–104 (NLPS…AECL), 452–511 (KSRN…ENSR), and 516–535 (QLSA…KSVE). Positions 87-98 (SHASSPNLSNSQ) are enriched in polar residues. Over residues 452-463 (KSRNLTKSEKTG) the composition is skewed to basic and acidic residues. Composition is skewed to polar residues over residues 464–496 (KSNS…SDNP) and 517–532 (LSAS…STLK). One can recognise an IPT/TIG domain in the interval 658-739 (PLISRIIPNK…SSEAPVMFTY (82 aa)). ANK repeat units follow at residues 861 to 890 (SGRS…DVNK) and 894 to 923 (LGYT…KPDV). Positions 1041-1067 (PPPYSEFADDTTAQAGSSKRDSAISED) are disordered. A compositionally biased stretch (basic and acidic residues) spans 1058-1067 (SKRDSAISED). Residues 1113–1133 (MDFMLFSFWLPALLLLSIFGL) form a helical membrane-spanning segment.

The protein localises to the vacuole membrane. This is Ankyrin and IPT/TIG repeat-containing protein C26H5.05 from Schizosaccharomyces pombe (strain 972 / ATCC 24843) (Fission yeast).